The following is a 96-amino-acid chain: uncharacterized protein (96 aa).

The stretch at 9-86 (EELKSQAQVY…NKYADTVAER (78 aa)) forms a coiled coil.

It belongs to the WXG100 family. sagEsxA-like subfamily.

This is an uncharacterized protein from Clostridium acetobutylicum (strain ATCC 824 / DSM 792 / JCM 1419 / IAM 19013 / LMG 5710 / NBRC 13948 / NRRL B-527 / VKM B-1787 / 2291 / W).